A 129-amino-acid chain; its full sequence is MAKEAARVRRRERKNIASGVAHVNSSFNNTTITITDAQGNTIAWSSAGTMGFKGSRKSTPYAAQVAAEDVSKKAQEHGMRTLEVEVAGPGSGRESALRALQAAGFTVTSIRDVTTIPHNGCRPRKRRRV.

Belongs to the universal ribosomal protein uS11 family. As to quaternary structure, part of the 30S ribosomal subunit. Interacts with proteins S7 and S18. Binds to IF-3.

In terms of biological role, located on the platform of the 30S subunit, it bridges several disparate RNA helices of the 16S rRNA. Forms part of the Shine-Dalgarno cleft in the 70S ribosome. This is Small ribosomal subunit protein uS11 from Bradyrhizobium sp. (strain ORS 278).